We begin with the raw amino-acid sequence, 190 residues long: Protein GrpE (190 aa).

The segment at 1-40 (MAKEKKEEVKEEEVSEATSTEGSTDVESTNNDDLTTETQA) is disordered. Polar residues predominate over residues 22-40 (GSTDVESTNNDDLTTETQA).

The protein belongs to the GrpE family. As to quaternary structure, homodimer.

Its subcellular location is the cytoplasm. Participates actively in the response to hyperosmotic and heat shock by preventing the aggregation of stress-denatured proteins, in association with DnaK and GrpE. It is the nucleotide exchange factor for DnaK and may function as a thermosensor. Unfolded proteins bind initially to DnaJ; upon interaction with the DnaJ-bound protein, DnaK hydrolyzes its bound ATP, resulting in the formation of a stable complex. GrpE releases ADP from DnaK; ATP binding to DnaK triggers the release of the substrate protein, thus completing the reaction cycle. Several rounds of ATP-dependent interactions between DnaJ, DnaK and GrpE are required for fully efficient folding. The sequence is that of Protein GrpE from Pediococcus pentosaceus (strain ATCC 25745 / CCUG 21536 / LMG 10740 / 183-1w).